Here is a 429-residue protein sequence, read N- to C-terminus: 3-phosphoshikimate 1-carboxyvinyltransferase (429 aa).

3-phosphoshikimate-binding residues include Lys-11, Ser-12, and Arg-16. Lys-11 lines the phosphoenolpyruvate pocket. Positions 82 and 110 each coordinate phosphoenolpyruvate. Residues Ser-155, Gln-157, Asp-302, and Lys-329 each contribute to the 3-phosphoshikimate site. Gln-157 lines the phosphoenolpyruvate pocket. The active-site Proton acceptor is Asp-302. 2 residues coordinate phosphoenolpyruvate: Arg-333 and Arg-385.

It belongs to the EPSP synthase family. In terms of assembly, monomer.

The protein localises to the cytoplasm. It catalyses the reaction 3-phosphoshikimate + phosphoenolpyruvate = 5-O-(1-carboxyvinyl)-3-phosphoshikimate + phosphate. The protein operates within metabolic intermediate biosynthesis; chorismate biosynthesis; chorismate from D-erythrose 4-phosphate and phosphoenolpyruvate: step 6/7. Its function is as follows. Catalyzes the transfer of the enolpyruvyl moiety of phosphoenolpyruvate (PEP) to the 5-hydroxyl of shikimate-3-phosphate (S3P) to produce enolpyruvyl shikimate-3-phosphate and inorganic phosphate. This is 3-phosphoshikimate 1-carboxyvinyltransferase from Helicobacter pylori (strain ATCC 700392 / 26695) (Campylobacter pylori).